The chain runs to 101 residues: Small ribosomal subunit protein bS6 (101 aa).

Belongs to the bacterial ribosomal protein bS6 family.

Binds together with bS18 to 16S ribosomal RNA. The chain is Small ribosomal subunit protein bS6 from Micrococcus luteus (strain ATCC 4698 / DSM 20030 / JCM 1464 / CCM 169 / CCUG 5858 / IAM 1056 / NBRC 3333 / NCIMB 9278 / NCTC 2665 / VKM Ac-2230) (Micrococcus lysodeikticus).